We begin with the raw amino-acid sequence, 202 residues long: Proteasome subunit beta 1 (202 aa).

Positions 1–8 (MGEVVLPG) are cleaved as a propeptide — removed in mature form; by autocatalysis. The active-site Nucleophile is the Thr-9.

This sequence belongs to the peptidase T1B family. As to quaternary structure, the 20S proteasome core is composed of 14 alpha and 14 beta subunits that assemble into four stacked heptameric rings, resulting in a barrel-shaped structure. The two inner rings, each composed of seven catalytic beta subunits, are sandwiched by two outer rings, each composed of seven alpha subunits. The catalytic chamber with the active sites is on the inside of the barrel. Has a gated structure, the ends of the cylinder being occluded by the N-termini of the alpha-subunits. Is capped at one or both ends by the proteasome regulatory ATPase, PAN.

The protein resides in the cytoplasm. It catalyses the reaction Cleavage of peptide bonds with very broad specificity.. With respect to regulation, the formation of the proteasomal ATPase PAN-20S proteasome complex, via the docking of the C-termini of PAN into the intersubunit pockets in the alpha-rings, triggers opening of the gate for substrate entry. Interconversion between the open-gate and close-gate conformations leads to a dynamic regulation of the 20S proteasome proteolysis activity. Functionally, component of the proteasome core, a large protease complex with broad specificity involved in protein degradation. The chain is Proteasome subunit beta 1 from Desulfurococcus amylolyticus (strain DSM 18924 / JCM 16383 / VKM B-2413 / 1221n) (Desulfurococcus kamchatkensis).